The primary structure comprises 294 residues: Protein PET54 (294 aa).

Its subcellular location is the mitochondrion inner membrane. In terms of biological role, activator of specific mitochondrial mRNAs. PET54 is involved in the excision of intron aI5-beta from pre-mRNA for cytochrome c oxidase I (COX1) and plays a role in promoting the translation of COX3. This is Protein PET54 (PET54) from Saccharomyces bayanus (Yeast).